Consider the following 187-residue polypeptide: Elongation factor P (187 aa).

It belongs to the elongation factor P family.

The protein resides in the cytoplasm. Its pathway is protein biosynthesis; polypeptide chain elongation. Functionally, involved in peptide bond synthesis. Stimulates efficient translation and peptide-bond synthesis on native or reconstituted 70S ribosomes in vitro. Probably functions indirectly by altering the affinity of the ribosome for aminoacyl-tRNA, thus increasing their reactivity as acceptors for peptidyl transferase. This is Elongation factor P from Desulfosudis oleivorans (strain DSM 6200 / JCM 39069 / Hxd3) (Desulfococcus oleovorans).